The chain runs to 433 residues: Alpha-(1,3)-fucosyltransferase 4 (433 aa).

The Cytoplasmic portion of the chain corresponds to 1–52; it reads MAPARQELQHESRCRPSRTVDAWRAAVATRGRHMETPGYRRRTRCGGWGLPR. The helical; Signal-anchor for type II membrane protein transmembrane segment at 53 to 74 threads the bilayer; it reads SVSSLAAVGLLCTALTTFICWG. Residues 75-433 are Lumenal-facing; that stretch reads QLPPLPWASP…IHNLADWFQR (359 aa). Residues Asn117 and Asn218 are each glycosylated (N-linked (GlcNAc...) asparagine).

It belongs to the glycosyltransferase 10 family. As to expression, highest expression in stomach and colon. It is also expressed in the lung, testis, uterus, small intestine and to a lesser extent in spleen, and ovary. Present in trace amounts in brain, thymus, heart, smooth muscle, kidney and bone marrow. Not found in liver, salivary gland and pancreas.

It localises to the golgi apparatus. It is found in the golgi stack membrane. It carries out the reaction a beta-D-galactosyl-(1-&gt;4)-N-acetyl-beta-D-glucosaminyl derivative + GDP-beta-L-fucose = a beta-D-galactosyl-(1-&gt;4)-[alpha-L-fucosyl-(1-&gt;3)]-N-acetyl-beta-D-glucosaminyl derivative + GDP + H(+). The enzyme catalyses an N-acetyl-alpha-neuraminyl-(2-&gt;3)-beta-D-galactosyl-(1-&gt;4)-N-acetyl-beta-D-glucosaminyl derivative + GDP-beta-L-fucose = an alpha-Neu5Ac-(2-&gt;3)-beta-D-Gal-(1-&gt;4)-[alpha-L-Fuc-(1-&gt;3)]-beta-D-GlcNAc derivative + GDP + H(+). It catalyses the reaction an alpha-Neu5Ac-(2-&gt;3)-beta-D-Gal-(1-&gt;4)-beta-D-GlcNAc-(1-&gt;3)-beta-D-Gal-(1-&gt;4)-beta-D-GlcNAc derivative + GDP-beta-L-fucose = an alpha-Neu5Ac-(2-&gt;3)-beta-D-Gal-(1-&gt;4)-beta-D-GlcNAc-(1-&gt;3)-beta-D-Gal-(1-&gt;4)-[alpha-L-Fuc-(1-&gt;3)]-beta-D-GlcNAc derivative + GDP + H(+). The catalysed reaction is an alpha-Neu5Ac-(2-&gt;3)-beta-D-Gal-(1-&gt;4)-beta-D-GlcNAc6S derivative + GDP-beta-L-fucose = an alpha-Neu5Ac-(2-&gt;3)-beta-D-Gal-(1-&gt;4)-[alpha-L-Fuc-(1-&gt;3)]-beta-D-GlcNAc6S derivative + GDP + H(+). Its pathway is protein modification; protein glycosylation. Functionally, catalyzes alpha(1-&gt;3) linkage of fucosyl moiety transferred from GDP-beta-L-fucose to N-acetyl glucosamine (GlcNAc) within type 2 lactosamine (LacNAc, Gal-beta(1-&gt;4)GlcNAc) glycan attached to N- or O-linked glycoproteins. Robustly fucosylates nonsialylated distal LacNAc unit of the polylactosamine chain to form Lewis X antigen (CD15), a glycan determinant known to mediate important cellular functions in development and immunity. Fucosylates with lower efficiency sialylated LacNAc acceptors to form sialyl Lewis X and 6-sulfo sialyl Lewis X determinants that serve as recognition epitopes for C-type lectins. Together with FUT7 contributes to SELE, SELL and SELP selectin ligand biosynthesis and selectin-dependent lymphocyte homing, leukocyte migration and blood leukocyte homeostasis. In a cell type specific manner, may also fucosylate the internal LacNAc unit of the polylactosamine chain to form VIM-2 antigen that serves as recognition epitope for SELE. This is Alpha-(1,3)-fucosyltransferase 4 (Fut4) from Mus musculus (Mouse).